The chain runs to 807 residues: MPKHDSLWLKSLRWIQKHLVHTIVVPQDPFADLNLDAFRPLAYVMKTESLSDIAALSEITAKLGLPSPYEPLVANGVIAPRVVCLQGRKPLFGERAGNEPFLECFMRLLAVHKERPELDIQLVPVSLYWGRTPGKEDDTMKAAVFERENPTWLRKCLMILFLGRHNFVQFSNAVSLRYMADEHGTDMGIAHKLARVARVHFRRQRKVMTGPVLPNRQALFHSLLKSESLRKAIQEEAANKKISETQARETAIEYLDEIAADYSDSLVRIAERFLTWLWNKLYSGINIKGAEQVRQLHHDGHEIVYVPCHRSHMDYLLLSYILYYQGMVPPHIAAGINLNFWPAGPMFRRGGAFFIRRSFNGNKLYTAVFREYLDQLFAKGYSVEYFSEGGRSRTGRLLAPKTGMIAMTMNSVLRGIERPVTLVPVYLGYDHVMEVATYHKELSGKKKKKESVWQVFGAIRKLGNFGQGYVNFGEPITLQNFLNERAPNWRTELADDPEQKPSWLTPAVNVLANRVMTNINDAAAASSVTLTSLVLLATDQNALERSLLERQLDLYLTLLKKVPYTTYTSVAEGDGKHLVQQGLELNKFVVCADPLGEIVSIEASQAVSMTYYRNNIIHLFIVPSLIASCLTHNEQIPRQQVVSIVADFYPLLKAELFMGIKDVPAYVNQVLDFFIEQGLVVETDTLTVVPEHTSQLLLLASSVSETLQRYAIIFNLLANRPKMERSELESESHLLAQRLGALHGITAPEFYDKKLYGTLSVKLKELGYLADNQDKSNINRIRDQANSLLRPSVKQTIVASVTAEHTV.

Residues C308 to M313 carry the HXXXXD motif motif.

Belongs to the GPAT/DAPAT family.

The protein localises to the cell inner membrane. The enzyme catalyses sn-glycerol 3-phosphate + an acyl-CoA = a 1-acyl-sn-glycero-3-phosphate + CoA. The protein operates within phospholipid metabolism; CDP-diacylglycerol biosynthesis; CDP-diacylglycerol from sn-glycerol 3-phosphate: step 1/3. The sequence is that of Glycerol-3-phosphate acyltransferase from Shewanella baltica (strain OS223).